The primary structure comprises 337 residues: Methionyl-tRNA formyltransferase (337 aa).

Position 110–113 (110–113) interacts with (6S)-5,6,7,8-tetrahydrofolate; sequence SLLP.

The protein belongs to the Fmt family.

It carries out the reaction L-methionyl-tRNA(fMet) + (6R)-10-formyltetrahydrofolate = N-formyl-L-methionyl-tRNA(fMet) + (6S)-5,6,7,8-tetrahydrofolate + H(+). Functionally, attaches a formyl group to the free amino group of methionyl-tRNA(fMet). The formyl group appears to play a dual role in the initiator identity of N-formylmethionyl-tRNA by promoting its recognition by IF2 and preventing the misappropriation of this tRNA by the elongation apparatus. This chain is Methionyl-tRNA formyltransferase, found in Frankia casuarinae (strain DSM 45818 / CECT 9043 / HFP020203 / CcI3).